A 152-amino-acid polypeptide reads, in one-letter code: Ribosome maturation factor RimP (152 aa).

It belongs to the RimP family.

It localises to the cytoplasm. Its function is as follows. Required for maturation of 30S ribosomal subunits. In Desulfatibacillum aliphaticivorans, this protein is Ribosome maturation factor RimP.